The chain runs to 607 residues: Elongation factor 4 (607 aa).

One can recognise a tr-type G domain in the interval 11-193; sequence SKIRNFSIIA…QIVEKVPAPA (183 aa). Residues 23–28 and 140–143 each bind GTP; these read DHGKST and NKID.

It belongs to the TRAFAC class translation factor GTPase superfamily. Classic translation factor GTPase family. LepA subfamily.

It is found in the cell membrane. It catalyses the reaction GTP + H2O = GDP + phosphate + H(+). Functionally, required for accurate and efficient protein synthesis under certain stress conditions. May act as a fidelity factor of the translation reaction, by catalyzing a one-codon backward translocation of tRNAs on improperly translocated ribosomes. Back-translocation proceeds from a post-translocation (POST) complex to a pre-translocation (PRE) complex, thus giving elongation factor G a second chance to translocate the tRNAs correctly. Binds to ribosomes in a GTP-dependent manner. The chain is Elongation factor 4 from Bacillus cereus (strain B4264).